Reading from the N-terminus, the 104-residue chain is Large ribosomal subunit protein eL30 (104 aa).

Belongs to the eukaryotic ribosomal protein eL30 family.

The polypeptide is Large ribosomal subunit protein eL30 (RPL30) (Leishmania major).